Consider the following 506-residue polypeptide: Deoxyribodipyrimidine photo-lyase (506 aa).

A compositionally biased stretch (pro residues) spans 1–21; that stretch reads MPPTSVSPPRTAPGPANPSPA. The tract at residues 1–33 is disordered; it reads MPPTSVSPPRTAPGPANPSPAHPSRVRVIHPGG. Residues 38–171 form the Photolyase/cryptochrome alpha/beta domain; that stretch reads GPVVYWMLRD…AVHQVDAHNV (134 aa). Residues Tyr-268 and 282 to 285 each bind FAD; that span reads SGLS. Position 312 is a phosphoserine (Ser-312). FAD contacts are provided by residues 319 to 327, Lys-390, Asn-421, Asp-427, and 427 to 429; these read ELVVRRELA and DGR. The segment at 487–506 is disordered; that stretch reads KKRNAEESPNPVVKLSKSQH.

The protein belongs to the DNA photolyase class-2 family. The cofactor is FAD. Expressed in proliferating tissues. Highly expressed in roots and shoot apical meristem (SAM). Expressed in leaves, flag leaves, and panicle.

It localises to the nucleus. It carries out the reaction cyclobutadipyrimidine (in DNA) = 2 pyrimidine residues (in DNA).. Involved in repair of UV radiation-induced DNA damage. Catalyzes the light-dependent monomerization (300-600 nm) of cyclobutylpyrimidine dimers (CPDs), which are formed between adjacent bases on the same DNA strand upon exposure to ultraviolet radiation. Required for plant survival in the presence of UV-B light. Not involved in the repair of (6-4) photoproducts. This is Deoxyribodipyrimidine photo-lyase (PHR) from Oryza sativa subsp. japonica (Rice).